Consider the following 120-residue polypeptide: NAD(P)H-quinone oxidoreductase subunit 3, chloroplastic (120 aa).

The next 3 helical transmembrane spans lie at 14-34 (LIIS…LAPI), 64-84 (MFAL…PWAM), and 88-108 (VLGV…IVGS).

The protein belongs to the complex I subunit 3 family. As to quaternary structure, NDH is composed of at least 16 different subunits, 5 of which are encoded in the nucleus.

The protein localises to the plastid. It localises to the chloroplast thylakoid membrane. The enzyme catalyses a plastoquinone + NADH + (n+1) H(+)(in) = a plastoquinol + NAD(+) + n H(+)(out). It carries out the reaction a plastoquinone + NADPH + (n+1) H(+)(in) = a plastoquinol + NADP(+) + n H(+)(out). In terms of biological role, NDH shuttles electrons from NAD(P)H:plastoquinone, via FMN and iron-sulfur (Fe-S) centers, to quinones in the photosynthetic chain and possibly in a chloroplast respiratory chain. The immediate electron acceptor for the enzyme in this species is believed to be plastoquinone. Couples the redox reaction to proton translocation, and thus conserves the redox energy in a proton gradient. The chain is NAD(P)H-quinone oxidoreductase subunit 3, chloroplastic from Cicer arietinum (Chickpea).